A 159-amino-acid polypeptide reads, in one-letter code: Cyclin-dependent kinase inhibitor 1 (159 aa).

S2 bears the N-acetylserine mark. S2 participates in a covalent cross-link: Glycyl serine ester (Ser-Gly) (interchain with G-Cter in ubiquitin). A C4-type zinc finger spans residues 12–40 (HRSKVCRCLFGPVDSEQLRRDCDALMAGC). The tract at residues 17–24 (CRCLFGPV) is required for binding cyclins. The segment at 53-58 (VTETPL) is required for binding CDKs. Position 78 is a phosphoserine; by NUAK1 (S78). The tract at residues 78 to 106 (SPGSRSRDDLGGDKRPSTSSALLQGPAPE) is disordered. Positions 82 to 93 (RSRDDLGGDKRP) are enriched in basic and acidic residues. Residue S112 is modified to Phosphoserine; by GSK3-beta. The segment at 118–142 (VSERPEDSPGGPGTSQGRKRRQTSL) is disordered. At S125 the chain carries Phosphoserine. Residues 135 to 159 (RKRRQTSLTDFYHSKRRLVFCKRKP) carry the PIP-box K+4 motif motif. T140 bears the Phosphothreonine; by PKA, PKB/AKT1, PIM1 and PIM2 mark. A Phosphoserine; by NUAK1 modification is found at S141. An interaction with TRIM39 region spans residues 147–159 (HSKRRLVFCKRKP).

It belongs to the CDI family. As to quaternary structure, interacts with HDAC1; the interaction is prevented by competitive binding of C10orf90/FATS to HDAC1 facilitating acetylation and protein stabilization of CDKN1A/p21. Interacts with MKRN1. Interacts with PSMA3. Interacts with PCNA. Component of the ternary complex, cyclin D-CDK4-CDKN1A. Interacts (via its N-terminal domain) with CDK4; the interaction promotes the assembly of the cyclin D-CDK4 complex, its nuclear translocation and promotes the cyclin D-dependent enzyme activity of CDK4. Binding to CDK2 leads to CDK2/cyclin E inactivation at the G1-S phase DNA damage checkpoint, thereby arresting cells at the G1-S transition during DNA repair. Interacts with PIM1. Interacts with STK11. Interacts with NUAK1. Interacts with DTL and TRIM39. Interacts with PKP3; the interaction sequesters CDKN1A to the cytoplasm thereby repressing its role as an inhibitor of CDK4- and CDK6-driven RB1 phosphorylation. Post-translationally, phosphorylation of Thr-140 or Ser-141 impairs binding to PCNA. Phosphorylation at Ser-112 by GSK3-beta enhances ubiquitination by the DCX(DTL) complex. Phosphorylation of Thr-140 by PIM2 enhances its stability and inhibits cell proliferation. Phosphorylation of Thr-140 by PIM1 results in the relocation of CDKN1A to the cytoplasm and enhanced CDKN1A protein stability. UV radiation-induced phosphorylation at Ser-78 and Ser-141 by NUAK1 leads to its degradation. In terms of processing, ubiquitinated by MKRN1; leading to polyubiquitination and 26S proteasome-dependent degradation. Ubiquitinated by the DCX(DTL) complex, also named CRL4(CDT2) complex, leading to its degradation during S phase or following UV irradiation. Ubiquitination by the DCX(DTL) complex is essential to control replication licensing and is PCNA-dependent: interacts with PCNA via its PIP-box, while the presence of the containing the 'K+4' motif in the PIP box, recruit the DCX(DTL) complex, leading to its degradation. Ubiquitination at Ser-2 leads to degradation by the proteasome pathway. Ubiquitinated by RNF114; leading to proteasomal degradation. Acetylation leads to protein stability. Acetylated in vitro on Lys-136, Lys-149, Lys-156 and Lys-158. Deacetylation by HDAC1 is prevented by competitive binding of C10orf90/FATS to HDAC1. As to expression, expressed in keratinocytes (at protein level).

The protein resides in the cytoplasm. The protein localises to the nucleus. Its function is as follows. May be involved in p53/TP53 mediated inhibition of cellular proliferation in response to DNA damage. Binds to and inhibits cyclin-dependent kinase activity, preventing phosphorylation of critical cyclin-dependent kinase substrates and blocking cell cycle progression. Functions in the nuclear localization and assembly of cyclin D-CDK4 complex and promotes its kinase activity towards RB1. At higher stoichiometric ratios, inhibits the kinase activity of the cyclin D-CDK4 complex. Inhibits DNA synthesis by DNA polymerase delta by competing with POLD3 for PCNA binding. Plays an important role in controlling cell cycle progression and DNA damage-induced G2 arrest. Functionally, plays an important role in controlling cell cycle progression and DNA damage-induced G2 arrest. Involved in p53/TP53 mediated inhibition of cellular proliferation in response to DNA damage. Also involved in p53-independent DNA damage-induced G2 arrest mediated by CREB3L1 in astrocytes and osteoblasts. Binds to and inhibits cyclin-dependent kinase activity, preventing phosphorylation of critical cyclin-dependent kinase substrates and blocking cell cycle progression. Functions in the nuclear localization and assembly of cyclin D-CDK4 complex and promotes its kinase activity towards RB1. At higher stoichiometric ratios, inhibits the kinase activity of the cyclin D-CDK4 complex. Inhibits DNA synthesis by DNA polymerase delta by competing with POLD3 for PCNA binding. Negatively regulates the CDK4- and CDK6-driven phosphorylation of RB1 in keratinocytes, thereby resulting in the release of E2F1 and subsequent transcription of E2F1-driven G1/S phase promoting genes. The sequence is that of Cyclin-dependent kinase inhibitor 1 (Cdkn1a) from Mus musculus (Mouse).